Consider the following 371-residue polypeptide: uncharacterized protein (371 aa).

Transmembrane regions (helical) follow at residues 9 to 29 (FTLD…VFLI), 58 to 78 (VLAF…FLAI), 98 to 118 (LIVA…SFIF), 133 to 153 (LAPF…VSVI), 159 to 179 (YDVN…ALAA), 183 to 203 (ISNF…IGDW), and 330 to 350 (IIEI…MVVV).

This sequence belongs to the MscS (TC 1.A.23) family.

It localises to the cell membrane. In terms of biological role, may play a role in resistance to osmotic downshock. This is an uncharacterized protein from Bacillus subtilis (strain 168).